Here is a 588-residue protein sequence, read N- to C-terminus: Transcription factor tau 60 kDa subunit (588 aa).

The segment at 399–588 is sufficient for SPT15-binding; it reads LPKLPENFSM…VYCGTTLEVM (190 aa).

As to quaternary structure, heterodimer with TFC6. Component of the TFIIIC complex composed of TFC1, TFC3, TFC4, TFC6, TFC7 and TFC8. The subunits are organized in two globular domains, tauA and tauB, connected by a proteolysis-sensitive and flexible linker. Interacts with SPT15 and directly with TFC6.

Its subcellular location is the nucleus. Its function is as follows. TFIIIC mediates tRNA and 5S RNA gene activation by binding to intragenic promoter elements. Upstream of the transcription start site, TFIIIC assembles the initiation complex TFIIIB-TFIIIC-tDNA, which is sufficient for RNA polymerase III recruitment and function. Part of the tauB domain of TFIIIC that binds boxB DNA promoter sites of tRNA and similar genes. Plays a role in TFIIB assembly through its interaction with SPT15/TBP. Essential for cell viability. The chain is Transcription factor tau 60 kDa subunit (TFC8) from Saccharomyces cerevisiae (strain ATCC 204508 / S288c) (Baker's yeast).